A 369-amino-acid chain; its full sequence is MTVTGIVAEFNPFHNGHKYLLEQAQGIKVIAMSGNFMQRGEPAIVDKWTRSQMALENGADLVIELPFLVSVQSADYFASGAVSILARLGVDNLCFGTEEMLDYARIGDIYVNKKEEMEAFLKKQSDSLSYPQKMQAMWQEFAGITFSGQTPNHILGLAYTKAASQNGIRLNPIQRQGAGYHSSEKTEIFASATSLRKHQSDRFFVEKGMPNSDLFLNSPQVVWQDYFSLLKYQIMTHSDLTQIYQVNEEIANRIKSQIRYVETVDELVDKVATKRYTKARIRRLLTYILINAVESPIPNAIHVLGFTQKGQQHLKSVKKSVDIVTRIGSQTWDSLTQRADSVYQMGNANIAEQTWGRIPFYQPVSQSDL.

Residues 7–20 (VAEF…HKYL), Gly-96, Asn-152, and Arg-175 contribute to the ATP site.

This sequence belongs to the TmcAL family.

Its subcellular location is the cytoplasm. It carries out the reaction cytidine(34) in elongator tRNA(Met) + acetate + ATP = N(4)-acetylcytidine(34) in elongator tRNA(Met) + AMP + diphosphate. Its function is as follows. Catalyzes the formation of N(4)-acetylcytidine (ac(4)C) at the wobble position of elongator tRNA(Met), using acetate and ATP as substrates. First activates an acetate ion to form acetyladenylate (Ac-AMP) and then transfers the acetyl group to tRNA to form ac(4)C34. The chain is tRNA(Met) cytidine acetate ligase from Streptococcus agalactiae serotype Ia (strain ATCC 27591 / A909 / CDC SS700).